Reading from the N-terminus, the 828-residue chain is Periplasmic nitrate reductase (828 aa).

The segment at residues 1 to 32 (MNLSRRDFMKANAAMAAATAAGLSIPVKNVEA) is a signal peptide (tat-type signal). The region spanning 37–93 (IKWDKAVCRFCGTGCAVLVGTKDGRVVASQGDPDAEVNRGLNCIKGYFLPKIMYGKD) is the 4Fe-4S Mo/W bis-MGD-type domain. [4Fe-4S] cluster is bound by residues Cys-44, Cys-47, Cys-51, and Cys-79. Residues Lys-81, Gln-148, Asn-173, Cys-177, 210–217 (WGSNMAEM), 241–245 (STFEH), Met-371, Gln-375, Asn-481, 507–508 (SD), Lys-530, Asp-557, and 717–726 (TGRVLEHWHT) each bind Mo-bis(molybdopterin guanine dinucleotide). Phe-793 provides a ligand contact to substrate. Mo-bis(molybdopterin guanine dinucleotide) contacts are provided by Asn-801 and Lys-818.

It belongs to the prokaryotic molybdopterin-containing oxidoreductase family. NasA/NapA/NarB subfamily. Component of the periplasmic nitrate reductase NapAB complex composed of NapA and NapB. [4Fe-4S] cluster is required as a cofactor. Requires Mo-bis(molybdopterin guanine dinucleotide) as cofactor. Post-translationally, predicted to be exported by the Tat system. The position of the signal peptide cleavage has not been experimentally proven.

Its subcellular location is the periplasm. It carries out the reaction 2 Fe(II)-[cytochrome] + nitrate + 2 H(+) = 2 Fe(III)-[cytochrome] + nitrite + H2O. In terms of biological role, catalytic subunit of the periplasmic nitrate reductase complex NapAB. Receives electrons from NapB and catalyzes the reduction of nitrate to nitrite. In Aggregatibacter actinomycetemcomitans (Actinobacillus actinomycetemcomitans), this protein is Periplasmic nitrate reductase.